We begin with the raw amino-acid sequence, 264 residues long: Thymidylate synthase (264 aa).

R21 is a dUMP binding site. A (6R)-5,10-methylene-5,6,7,8-tetrahydrofolate-binding site is contributed by H51. 126 to 127 (RR) lines the dUMP pocket. C146 acts as the Nucleophile in catalysis. DUMP is bound by residues 166–169 (RSAD), N177, and 207–209 (HIY). Position 169 (D169) interacts with (6R)-5,10-methylene-5,6,7,8-tetrahydrofolate. A263 is a binding site for (6R)-5,10-methylene-5,6,7,8-tetrahydrofolate.

It belongs to the thymidylate synthase family. Bacterial-type ThyA subfamily. Homodimer.

It localises to the cytoplasm. It carries out the reaction dUMP + (6R)-5,10-methylene-5,6,7,8-tetrahydrofolate = 7,8-dihydrofolate + dTMP. It functions in the pathway pyrimidine metabolism; dTTP biosynthesis. Its function is as follows. Catalyzes the reductive methylation of 2'-deoxyuridine-5'-monophosphate (dUMP) to 2'-deoxythymidine-5'-monophosphate (dTMP) while utilizing 5,10-methylenetetrahydrofolate (mTHF) as the methyl donor and reductant in the reaction, yielding dihydrofolate (DHF) as a by-product. This enzymatic reaction provides an intracellular de novo source of dTMP, an essential precursor for DNA biosynthesis. The sequence is that of Thymidylate synthase from Rhizobium meliloti (strain 1021) (Ensifer meliloti).